A 353-amino-acid polypeptide reads, in one-letter code: UDP-N-acetylglucosamine--N-acetylmuramyl-(pentapeptide) pyrophosphoryl-undecaprenol N-acetylglucosamine transferase (353 aa).

Residues asparagine 123, arginine 161, serine 189, isoleucine 243, 262–267, and glutamine 287 contribute to the UDP-N-acetyl-alpha-D-glucosamine site; that span reads ALTVSE.

It belongs to the glycosyltransferase 28 family. MurG subfamily.

Its subcellular location is the cell membrane. It carries out the reaction di-trans,octa-cis-undecaprenyl diphospho-N-acetyl-alpha-D-muramoyl-L-alanyl-D-glutamyl-meso-2,6-diaminopimeloyl-D-alanyl-D-alanine + UDP-N-acetyl-alpha-D-glucosamine = di-trans,octa-cis-undecaprenyl diphospho-[N-acetyl-alpha-D-glucosaminyl-(1-&gt;4)]-N-acetyl-alpha-D-muramoyl-L-alanyl-D-glutamyl-meso-2,6-diaminopimeloyl-D-alanyl-D-alanine + UDP + H(+). It functions in the pathway cell wall biogenesis; peptidoglycan biosynthesis. Its function is as follows. Cell wall formation. Catalyzes the transfer of a GlcNAc subunit on undecaprenyl-pyrophosphoryl-MurNAc-pentapeptide (lipid intermediate I) to form undecaprenyl-pyrophosphoryl-MurNAc-(pentapeptide)GlcNAc (lipid intermediate II). This chain is UDP-N-acetylglucosamine--N-acetylmuramyl-(pentapeptide) pyrophosphoryl-undecaprenol N-acetylglucosamine transferase, found in Buchnera aphidicola subsp. Baizongia pistaciae (strain Bp).